Here is a 505-residue protein sequence, read N- to C-terminus: MDLLLLEKTLIGLFIAIIIATIVSKLRSKRFKLPPGPIPVPVFGNWLQVGDDLNHRNLTEYAKKFGDLFLLRMGQRNLVVVSSPDLAKEVLHTQGVEFGSRTRNVVFDIFTGKGQDMVFTVYGEHWRKMRRIMTVPFFTNKVVQQYRGGWEYEVESVVEDVKKMKESNTNGIVLRKRLQLMMYNNMFRIMFDRRFESEDDPLFVKLKALNGERSRLAQSFEYNYGDFIPILRPFLRGYLKICKEVKEKRLKLFKDYFVDERKKLANTKSMDSNALKCAIDHILEAQQKGEINEDNVLYIVENINVAAIETTLWSIEWGIAELVNHPHIQKKLRDEIDTVLGPGVQVTEPDTHKLPYLQAVIKETLRLRMAIPLLVPHMNLHEAKLGGYDIPAESKILVNAWWLANNPAHWKNPEEFRPERFFEEEKHVEANGNDFRYLPFGVGRRSCPGIILALPILGITLGRLVQNFELLPPPGQSKIDTTEKGGQFSLHILKHSTIVLKPRSF.

2 short sequence motifs (nuclear localization signal) span residues 161–168 and 247–254; these read VKKMKESN and EKRLKLFK. Heme is bound at residue Cys447.

Belongs to the cytochrome P450 family. Requires heme as cofactor.

The protein resides in the nucleus. The catalysed reaction is (E)-cinnamate + reduced [NADPH--hemoprotein reductase] + O2 = (E)-4-coumarate + oxidized [NADPH--hemoprotein reductase] + H2O + H(+). It functions in the pathway phenylpropanoid metabolism; trans-4-coumarate biosynthesis; trans-4-coumarate from trans-cinnamate: step 1/1. Its function is as follows. Component of the floral volatile benzenoid/phenylpropanoid (FVBP) biosynthetic pathway that controls carbon flux to pigments essential for pollination or UV protection, to numerous pytoalexins synthesized by plants when challenged by pathogens, and to lignins. This is Trans-cinnamate 4-monooxygenase C4H2 from Petunia hybrida (Petunia).